Consider the following 129-residue polypeptide: MAGRGKGKTSGKKAVSRSAKAGLQFPVGRIARYLKKGKYAERIGAGAPVYLAAVLEYLTAEVLELAGNAARDNKKNRIVPRHIQLAIRNDEELGKLLGEVTIASGGVLPNIHAVLLPKKTKGGKGEETA.

The protein belongs to the histone H2A family. As to quaternary structure, the nucleosome is a histone octamer containing two molecules each of H2A, H2B, H3 and H4 assembled in one H3-H4 heterotetramer and two H2A-H2B heterodimers. The octamer wraps approximately 147 bp of DNA.

Its subcellular location is the nucleus. The protein localises to the chromosome. Functionally, core component of nucleosome. Nucleosomes wrap and compact DNA into chromatin, limiting DNA accessibility to the cellular machineries which require DNA as a template. Histones thereby play a central role in transcription regulation, DNA repair, DNA replication and chromosomal stability. DNA accessibility is regulated via a complex set of post-translational modifications of histones, also called histone code, and nucleosome remodeling. This chain is Histone H2A (H2A-II), found in Chlamydomonas reinhardtii (Chlamydomonas smithii).